Consider the following 88-residue polypeptide: Molybdopterin synthase sulfur carrier subunit (88 aa).

At G88 the chain carries 1-thioglycine; alternate. G88 carries the glycyl adenylate; alternate modification.

Belongs to the MoaD family. MOCS2A subfamily. Heterotetramer; composed of 2 small (MOCS2A) and 2 large (MOCS2B) subunits. Post-translationally, C-terminal thiocarboxylation occurs in 2 steps, it is first acyl-adenylated (-COAMP) via the hesA/moeB/thiF part of uba4, then thiocarboxylated (-COSH) via the rhodanese domain of uba4.

It is found in the cytoplasm. The protein operates within cofactor biosynthesis; molybdopterin biosynthesis. In terms of biological role, acts as a sulfur carrier required for molybdopterin biosynthesis. Component of the molybdopterin synthase complex that catalyzes the conversion of precursor Z into molybdopterin by mediating the incorporation of 2 sulfur atoms into precursor Z to generate a dithiolene group. In the complex, serves as sulfur donor by being thiocarboxylated (-COSH) at its C-terminus by uba4. After interaction with MOCS2B, the sulfur is then transferred to precursor Z to form molybdopterin. The chain is Molybdopterin synthase sulfur carrier subunit from Aspergillus niger (strain ATCC MYA-4892 / CBS 513.88 / FGSC A1513).